The chain runs to 386 residues: Succinate--CoA ligase [ADP-forming] subunit beta (386 aa).

The ATP-grasp domain maps to 9–244 (KALFREHGIP…ETQEDAREAR (236 aa)). Residues lysine 46, 53 to 55 (GRG), glutamate 99, threonine 102, and glutamate 107 each bind ATP. Positions 199 and 213 each coordinate Mg(2+). Substrate-binding positions include asparagine 264 and 321 to 323 (GIV).

It belongs to the succinate/malate CoA ligase beta subunit family. As to quaternary structure, heterotetramer of two alpha and two beta subunits. It depends on Mg(2+) as a cofactor.

The enzyme catalyses succinate + ATP + CoA = succinyl-CoA + ADP + phosphate. It catalyses the reaction GTP + succinate + CoA = succinyl-CoA + GDP + phosphate. The protein operates within carbohydrate metabolism; tricarboxylic acid cycle; succinate from succinyl-CoA (ligase route): step 1/1. Its function is as follows. Succinyl-CoA synthetase functions in the citric acid cycle (TCA), coupling the hydrolysis of succinyl-CoA to the synthesis of either ATP or GTP and thus represents the only step of substrate-level phosphorylation in the TCA. The beta subunit provides nucleotide specificity of the enzyme and binds the substrate succinate, while the binding sites for coenzyme A and phosphate are found in the alpha subunit. The protein is Succinate--CoA ligase [ADP-forming] subunit beta of Thioalkalivibrio sulfidiphilus (strain HL-EbGR7).